The following is a 92-amino-acid chain: UPF0223 protein SMU_1141c (92 aa).

It belongs to the UPF0223 family.

This Streptococcus mutans serotype c (strain ATCC 700610 / UA159) protein is UPF0223 protein SMU_1141c.